The following is a 432-amino-acid chain: UDP-glucose 6-dehydrogenase (432 aa).

NAD(+)-binding positions include 2–19 (NITF…GIIM), Val11, Asp30, Lys35, Thr121, and Glu152. Substrate contacts are provided by residues 148-152 (EFLRE), Lys202, Asn206, 247-251 (FLNAG), and Gly255. Cys258 serves as the catalytic Nucleophile. Residue Lys261 participates in NAD(+) binding. Position 319 (Lys319) interacts with substrate. Arg326 is an NAD(+) binding site.

It belongs to the UDP-glucose/GDP-mannose dehydrogenase family.

The catalysed reaction is UDP-alpha-D-glucose + 2 NAD(+) + H2O = UDP-alpha-D-glucuronate + 2 NADH + 3 H(+). Its pathway is nucleotide-sugar biosynthesis; UDP-alpha-D-glucuronate biosynthesis; UDP-alpha-D-glucuronate from UDP-alpha-D-glucose: step 1/1. The sequence is that of UDP-glucose 6-dehydrogenase (udg) from Rickettsia conorii (strain ATCC VR-613 / Malish 7).